The sequence spans 126 residues: Adenosine 5'-monophosphoramidase HINT1 (126 aa).

An N-acetylalanine modification is found at A2. The HIT domain occupies 18–126; sequence IFGKIIRKEI…GGRQMHWPPG (109 aa). An N6-acetyllysine mark is found at K21 and K30. AMP is bound at residue 43–44; that stretch reads DI. Phosphoserine is present on residues S45 and S72. AMP contacts are provided by residues N99, 105–107, and 112–114; these read GQS and HLH. Positions 110–114 match the Histidine triad motif motif; it reads HVHLH. Residue H112 is the Tele-AMP-histidine intermediate of the active site.

It belongs to the HINT family. Homodimer. Interacts with CDK7. Interacts with RUVBL1 and RUVBL2 and is associated with the LEF1/TCF1-CTNNB1 complex and with a KAT5 histone acetyltransferase complex. Identified in a complex with MITF and CTNNB1. Interacts with CDC34 and RBX1, and is part of a SCF (SKP2-CUL1-F-box protein) E3 ubiquitin-protein ligase complex. Interacts with SUMO1, SUMO2 and RGS17. Interacts with the Ten-1 ICD form of TENM1. Interacts with CALM1; interaction increases in the presence of calcium ions.

The protein resides in the cytoplasm. Its subcellular location is the nucleus. The enzyme catalyses adenosine 5'-phosphoramidate + H2O = AMP + NH4(+). Exhibits adenosine 5'-monophosphoramidase activity, hydrolyzing purine nucleotide phosphoramidates with a single phosphate group such as adenosine 5'monophosphoramidate (AMP-NH2) to yield AMP and NH2. Hydrolyzes adenosine 5'monophosphomorpholidate (AMP-morpholidate) and guanosine 5'monophosphomorpholidate (GMP-morpholidate). Hydrolyzes lysyl-AMP (AMP-N-epsilon-(N-alpha-acetyl lysine methyl ester)) generated by lysine tRNA ligase, as well as Met-AMP, His-AMP and Asp-AMP, lysyl-GMP (GMP-N-epsilon-(N-alpha-acetyl lysine methyl ester)) and AMP-N-alanine methyl ester. Can also convert adenosine 5'-O-phosphorothioate and guanosine 5'-O-phosphorothioate to the corresponding nucleoside 5'-O-phosphates with concomitant release of hydrogen sulfide. In addition, functions as a scaffolding protein that modulates transcriptional activation by the LEF1/TCF1-CTNNB1 complex and by the complex formed with MITF and CTNNB1. Modulates p53/TP53 levels and p53/TP53-mediated apoptosis. Modulates proteasomal degradation of target proteins by the SCF (SKP2-CUL1-F-box protein) E3 ubiquitin-protein ligase complex. Also exhibits SUMO-specific isopeptidase activity, deconjugating SUMO1 from RANGAP1 and RGS17. The sequence is that of Adenosine 5'-monophosphoramidase HINT1 (HINT1) from Pongo abelii (Sumatran orangutan).